Reading from the N-terminus, the 234-residue chain is N-acetyl-alpha-D-glucosaminyl L-malate deacetylase 1 (234 aa).

Histidine 12, aspartate 15, and histidine 113 together coordinate Zn(2+).

This sequence belongs to the PIGL family. In terms of assembly, homohexamer. Trimer of dimers. Requires Zn(2+) as cofactor.

It catalyses the reaction (S)-malyl N-acetyl-alpha-D-glucosaminide + H2O = (S)-malyl alpha-D-glucosaminide + acetate. Involved in bacillithiol (BSH) biosynthesis. Catalyzes the second step of the pathway, the deacetylation of N-acetylglucosaminylmalate (GlcNAc-Mal) to glucosamine malate (GlcN-Mal). In Bacillus cereus (strain ATCC 14579 / DSM 31 / CCUG 7414 / JCM 2152 / NBRC 15305 / NCIMB 9373 / NCTC 2599 / NRRL B-3711), this protein is N-acetyl-alpha-D-glucosaminyl L-malate deacetylase 1.